The sequence spans 470 residues: Neuraminidase (470 aa).

Residues 1–14 (MNPNQKIITIGSIS) lie on the Intravirion side of the membrane. Positions 11-32 (GSISLGLVVFNVLLHVVSIIVT) are involved in apical transport and lipid raft association. A helical transmembrane segment spans residues 15–35 (LGLVVFNVLLHVVSIIVTVLV). Residues 32 to 86 (TVLVLGRGGNNGICNETVVREYNETVRIEKITQWHNTSVVEYVPYWNEGTFMNNS) are hypervariable stalk region. The Virion surface portion of the chain corresponds to 36–470 (LGRGGNNGIC…AILPFDIDKM (435 aa)). Residues asparagine 46, asparagine 54, asparagine 67, and asparagine 84 are each glycosylated (N-linked (GlcNAc...) asparagine; by host). The segment at 89–470 (ICDVKGFAPF…AILPFDIDKM (382 aa)) is head of neuraminidase. Cystine bridges form between cysteine 90-cysteine 417, cysteine 122-cysteine 127, cysteine 182-cysteine 229, cysteine 231-cysteine 236, cysteine 277-cysteine 290, cysteine 279-cysteine 288, cysteine 316-cysteine 335, and cysteine 421-cysteine 446. Arginine 116 contacts substrate. Asparagine 144 is a glycosylation site (N-linked (GlcNAc...) asparagine; by host). The active-site Proton donor/acceptor is aspartate 149. Arginine 150 is a substrate binding site. Residue 275 to 276 (EE) coordinates substrate. Arginine 291 is a substrate binding site. Aspartate 292 contacts Ca(2+). Asparagine 293 carries N-linked (GlcNAc...) asparagine; by host glycosylation. Ca(2+) is bound by residues glycine 296 and aspartate 322. Arginine 368 provides a ligand contact to substrate. Asparagine 398 is a glycosylation site (N-linked (GlcNAc...) asparagine; by host). The active-site Nucleophile is tyrosine 402.

The protein belongs to the glycosyl hydrolase 34 family. In terms of assembly, homotetramer. The cofactor is Ca(2+). In terms of processing, N-glycosylated.

It localises to the virion membrane. Its subcellular location is the host apical cell membrane. It carries out the reaction Hydrolysis of alpha-(2-&gt;3)-, alpha-(2-&gt;6)-, alpha-(2-&gt;8)- glycosidic linkages of terminal sialic acid residues in oligosaccharides, glycoproteins, glycolipids, colominic acid and synthetic substrates.. Its activity is regulated as follows. Inhibited by the neuraminidase inhibitors zanamivir (Relenza) and oseltamivir (Tamiflu). These drugs interfere with the release of progeny virus from infected cells and are effective against all influenza strains. Resistance to neuraminidase inhibitors is quite rare. Catalyzes the removal of terminal sialic acid residues from viral and cellular glycoconjugates. Cleaves off the terminal sialic acids on the glycosylated HA during virus budding to facilitate virus release. Additionally helps virus spread through the circulation by further removing sialic acids from the cell surface. These cleavages prevent self-aggregation and ensure the efficient spread of the progeny virus from cell to cell. Otherwise, infection would be limited to one round of replication. Described as a receptor-destroying enzyme because it cleaves a terminal sialic acid from the cellular receptors. May facilitate viral invasion of the upper airways by cleaving the sialic acid moieties on the mucin of the airway epithelial cells. Likely to plays a role in the budding process through its association with lipid rafts during intracellular transport. May additionally display a raft-association independent effect on budding. Plays a role in the determination of host range restriction on replication and virulence. Sialidase activity in late endosome/lysosome traffic seems to enhance virus replication. The polypeptide is Neuraminidase (Aves (Horse)).